Here is a 160-residue protein sequence, read N- to C-terminus: Transcriptional repressor NrdR (160 aa).

Positions 1–11 (MRCPSCNSLDT) are enriched in polar residues. The tract at residues 1 to 20 (MRCPSCNSLDTQVKDSRPTE) is disordered. The segment at 3–34 (CPSCNSLDTQVKDSRPTEDSAVIRRRRVCMAC) is a zinc-finger region. The ATP-cone domain occupies 49-139 (LTVIKRNGRR…VYRNFREAKD (91 aa)).

Belongs to the NrdR family. It depends on Zn(2+) as a cofactor.

In terms of biological role, negatively regulates transcription of bacterial ribonucleotide reductase nrd genes and operons by binding to NrdR-boxes. The protein is Transcriptional repressor NrdR of Nitrobacter hamburgensis (strain DSM 10229 / NCIMB 13809 / X14).